Here is a 93-residue protein sequence, read N- to C-terminus: Small ribosomal subunit protein uS19 (93 aa).

Belongs to the universal ribosomal protein uS19 family.

Protein S19 forms a complex with S13 that binds strongly to the 16S ribosomal RNA. The chain is Small ribosomal subunit protein uS19 from Synechococcus sp. (strain JA-2-3B'a(2-13)) (Cyanobacteria bacterium Yellowstone B-Prime).